Reading from the N-terminus, the 423-residue chain is Histidine--tRNA ligase (423 aa).

The protein belongs to the class-II aminoacyl-tRNA synthetase family. As to quaternary structure, homodimer.

Its subcellular location is the cytoplasm. The catalysed reaction is tRNA(His) + L-histidine + ATP = L-histidyl-tRNA(His) + AMP + diphosphate + H(+). In Phytoplasma mali (strain AT), this protein is Histidine--tRNA ligase.